Consider the following 634-residue polypeptide: MFARRVCGSAAASAACLARHESQKVQGDVIGVDLGTTYSCVATMDGDKARVLENSEGFRTTPSVVAFKGSEKLVGLAAKRQAITNPQSTFYAVKRLIGRRFEDEHIQKDIKNVPYKIVRAGNGDAWVQDGNGKQYSPSQIGAFVLEKMKETAENFLGHKVSNAVVTCPAYFNDAQRQATKDAGTIAGLNVIRVVNEPTAAALAYGMDKTKDSLIAVYDLGGGTFDISVLEIAGGVFEVKATNGDTHLGGEDFDLALSDYILEEFRKTSGIDLSKERMALQRVREAAEKAKCELSSAMETEVNLPFITANADGAQHIQMRISRSKFEGITQRLIERSIAPCKQCMKDAGVELKEINDVVLVGGMTRIRSGGGGEEVLPEGPVRGVNPDEAVALGAATLGGVLRGKASDLILVDVTPLSLGTSVVGDVFVPIIPKNTTIPCMRSHIFTTVDDGQTAIKFKVFQGEREIASENQIRGEFDLSGIPPAPRGVPQVEVTFDIDANGICHVTAKDKATGKTQNITITANGGLSKEQIEQMIRDSEQHAEADRVKRELVEVRNNAETQLTTAERQLGEWKYVSDAEKENVKTLVAELRKAMENPNVAKDDLAAATDKLQKAVMECGRTEYQQAAAANSGQC.

The N-terminal 20 residues, 1–20 (MFARRVCGSAAASAACLARH), are a transit peptide targeting the mitochondrion. Positions 538–614 (SEQHAEADRV…AAATDKLQKA (77 aa)) form a coiled coil.

The protein belongs to the heat shock protein 70 family.

The protein resides in the mitochondrion. The protein is Heat shock 70-related protein 1, mitochondrial (HSP70.1) of Leishmania major.